The sequence spans 297 residues: Cbb3-type cytochrome c oxidase subunit CcoP (297 aa).

Over 1–35 (MSKKPTTKKEVQTTGHSWDGIEELNTPLPRWWLWT) the chain is Cytoplasmic. A helical membrane pass occupies residues 36 to 56 (FYATIVWGVAYSIAMPAWPIF). The Periplasmic segment spans residues 57 to 297 (ASGATPGILG…SYVHSLGGGQ (241 aa)). Cytochrome c domains are found at residues 108 to 199 (YTRN…LKIS) and 206 to 294 (ARAT…HSLG). Positions 121, 124, 125, 174, 219, 222, 223, and 264 each coordinate heme c.

It belongs to the CcoP / FixP family. Component of the cbb3-type cytochrome c oxidase at least composed of CcoN, CcoO, CcoQ and CcoP. Interacts with CcoH (via transmembrane domain). Requires heme c as cofactor.

The protein resides in the cell inner membrane. It participates in energy metabolism; oxidative phosphorylation. Functionally, C-type cytochrome. Part of the cbb3-type cytochrome c oxidase complex. CcoP subunit is required for transferring electrons from donor cytochrome c via its heme groups to CcoO subunit. From there, electrons are shuttled to the catalytic binuclear center of CcoN subunit where oxygen reduction takes place. The complex also functions as a proton pump. This Rhodobacter capsulatus (strain ATCC BAA-309 / NBRC 16581 / SB1003) protein is Cbb3-type cytochrome c oxidase subunit CcoP.